The chain runs to 411 residues: MAQINENYLKLPGSYLFSEIARRVNEFKVQNPDADIIRLGIGDVTRPLAPVVVEAMKQAVEEMGRAETFRGYGPEQGYDFLIEKIIANDYAPRGVQLGMDEVFVSDGAKSDTANFQEIFGVDNIMAVTDPVYPVYVDSNVMAGRTGNYDIEKGQYGRIIYLPCTEEGDMKPELPTAPVDMIYLCFPNNPTGMTLTKEELKVWVDYARENKAIILFDSAYEAFIREEGVPRSIYEVEGAREVAVEFRSFSKTAGFTGTRCAYTVVPKDIMIYDSTGEGHSLNKLWLRRQTTKFNGVSYPVQAGAAAVYTEEGKKQIQATIDYYMENARIIREGLQEAGFKVFGGVNAPYIWMKTPGTMGSWEFFDKLMTEAHVVGTPGAGFGANGEGFFRLTAFGTRENTEKAIERIKARMK.

Y15 and G42 together coordinate substrate. Residues Y72, A108–K109, Y132, N188, Y219, and S247–S249 each bind pyridoxal 5'-phosphate. K109, Y132, and N188 together coordinate substrate. N6-(pyridoxal phosphate)lysine is present on K250. Pyridoxal 5'-phosphate contacts are provided by R258 and N293. Substrate-binding residues include N293 and R389.

Belongs to the class-I pyridoxal-phosphate-dependent aminotransferase family. LL-diaminopimelate aminotransferase subfamily. Homodimer. The cofactor is pyridoxal 5'-phosphate.

It catalyses the reaction (2S,6S)-2,6-diaminopimelate + 2-oxoglutarate = (S)-2,3,4,5-tetrahydrodipicolinate + L-glutamate + H2O + H(+). It functions in the pathway amino-acid biosynthesis; L-lysine biosynthesis via DAP pathway; LL-2,6-diaminopimelate from (S)-tetrahydrodipicolinate (aminotransferase route): step 1/1. Involved in the synthesis of meso-diaminopimelate (m-DAP or DL-DAP), required for both lysine and peptidoglycan biosynthesis. Catalyzes the direct conversion of tetrahydrodipicolinate to LL-diaminopimelate. The protein is LL-diaminopimelate aminotransferase of Desulfitobacterium hafniense (strain Y51).